The following is a 171-amino-acid chain: Lipoprotein signal peptidase (171 aa).

3 helical membrane passes run 12-32 (WYWV…WVLA), 67-87 (WQRW…TVWL), and 93-113 (SLLK…GNLV). Residues Asp-123 and Asp-141 contribute to the active site. A helical membrane pass occupies residues 137–157 (FNIADSAICIGAVLIIWDAFL).

This sequence belongs to the peptidase A8 family.

Its subcellular location is the cell inner membrane. The catalysed reaction is Release of signal peptides from bacterial membrane prolipoproteins. Hydrolyzes -Xaa-Yaa-Zaa-|-(S,diacylglyceryl)Cys-, in which Xaa is hydrophobic (preferably Leu), and Yaa (Ala or Ser) and Zaa (Gly or Ala) have small, neutral side chains.. Its pathway is protein modification; lipoprotein biosynthesis (signal peptide cleavage). This protein specifically catalyzes the removal of signal peptides from prolipoproteins. This is Lipoprotein signal peptidase from Shewanella baltica (strain OS195).